Here is a 147-residue protein sequence, read N- to C-terminus: Putative acetyltransferase BSU40680 (147 aa).

One can recognise an N-acetyltransferase domain in the interval 1-144 (MNVKKITSEQ…PHVLMTKQDD (144 aa)). CoA contacts are provided by residues 74 to 76 (ICI) and 115 to 117 (GFY).

This sequence belongs to the UPF0039 (ElaA) family.

Could catalyze the transfer of an acetyl group from acetyl coenzyme A (AcCoA) to an acceptor substrate and release both CoA and the acetylated product. In Bacillus subtilis (strain 168), this protein is Putative acetyltransferase BSU40680 (yybD).